A 307-amino-acid chain; its full sequence is Elongation factor Ts, mitochondrial (307 aa).

The N-terminal 19 residues, 1–19 (MIFTRLTRFVGHGTGLRLY), are a transit peptide targeting the mitochondrion.

This sequence belongs to the EF-Ts family.

The protein localises to the mitochondrion. In terms of biological role, associates with the EF-Tu.GDP complex and induces the exchange of GDP to GTP. It remains bound to the aminoacyl-tRNA.EF-Tu.GTP complex up to the GTP hydrolysis stage on the ribosome. The chain is Elongation factor Ts, mitochondrial from Aedes aegypti (Yellowfever mosquito).